A 226-amino-acid chain; its full sequence is MFTLLVLLSQLPTVTLGFPHCARGPKASKHAGEEVFTSKEEANFFIHRRLLYNRFDLELFTPGNLERECNEELCNYEEAREIFVDEDKTIAFWQEYSAKGPTTKSDGNREKIDVMGLLTGLIAAGVFLVIFGLLGYYLCITKCNRLQHPCSSAVYERGRHTPSIIFRRPEEAALSPLPPSVEDAGLPSYEQAVALTRKHSVSPPPPYPGHTKGFRVFKKSMSLPSH.

The N-terminal stretch at 1-17 is a signal peptide; it reads MFTLLVLLSQLPTVTLG. Positions 18-49 are excised as a propeptide; that stretch reads FPHCARGPKASKHAGEEVFTSKEEANFFIHRR. The Extracellular portion of the chain corresponds to 50–113; it reads LLYNRFDLEL…KSDGNREKID (64 aa). The 47-residue stretch at 52–98 folds into the Gla domain; sequence YNRFDLELFTPGNLERECNEELCNYEEAREIFVDEDKTIAFWQEYSA. Cys69 and Cys74 form a disulfide bridge. Glu72 carries the 4-carboxyglutamate modification. A helical transmembrane segment spans residues 114-134; the sequence is VMGLLTGLIAAGVFLVIFGLL. The Cytoplasmic portion of the chain corresponds to 135–226; it reads GYYLCITKCN…FKKSMSLPSH (92 aa). A Phosphoserine modification is found at Ser163. The short motif at 186-189 is the LPXY motif; mediates binding to WW domain-containing proteins element; sequence LPSY. Residues 204–207 carry the PPXY motif; mediates binding to WW domain-containing proteins motif; sequence PPPY.

Belongs to the commissureless family. Interacts (via cytoplasmic domain) with WW domain-containing proteins MAGI1, MAGI3, NEDD4, NEDD4L, WWTR1/TAZ and YAP1. Post-translationally, gamma-carboxyglutamate residues are formed by vitamin K dependent carboxylation. These residues are essential for the binding of calcium. In terms of tissue distribution, widely expressed with highest levels in kidney.

It localises to the endoplasmic reticulum-Golgi intermediate compartment membrane. It is found in the cell membrane. Its function is as follows. May control axon guidance across the CNS. Prevents the delivery of ROBO1 at the cell surface and down-regulates its expression. The protein is Transmembrane gamma-carboxyglutamic acid protein 4 of Homo sapiens (Human).